Consider the following 347-residue polypeptide: Probable dual-specificity RNA methyltransferase RlmN (347 aa).

The Proton acceptor role is filled by glutamate 90. The 231-residue stretch at 96–326 folds into the Radical SAM core domain; the sequence is YKHGNSICIS…VTVRREMGSD (231 aa). The cysteines at positions 103 and 331 are disulfide-linked. [4Fe-4S] cluster is bound by residues cysteine 110, cysteine 114, and cysteine 117. Residues 157–158, serine 189, 212–214, and asparagine 288 contribute to the S-adenosyl-L-methionine site; these read GE and SLH. Cysteine 331 acts as the S-methylcysteine intermediate in catalysis.

The protein belongs to the radical SAM superfamily. RlmN family. Requires [4Fe-4S] cluster as cofactor.

The protein localises to the cytoplasm. It catalyses the reaction adenosine(2503) in 23S rRNA + 2 reduced [2Fe-2S]-[ferredoxin] + 2 S-adenosyl-L-methionine = 2-methyladenosine(2503) in 23S rRNA + 5'-deoxyadenosine + L-methionine + 2 oxidized [2Fe-2S]-[ferredoxin] + S-adenosyl-L-homocysteine. It carries out the reaction adenosine(37) in tRNA + 2 reduced [2Fe-2S]-[ferredoxin] + 2 S-adenosyl-L-methionine = 2-methyladenosine(37) in tRNA + 5'-deoxyadenosine + L-methionine + 2 oxidized [2Fe-2S]-[ferredoxin] + S-adenosyl-L-homocysteine. In terms of biological role, specifically methylates position 2 of adenine 2503 in 23S rRNA and position 2 of adenine 37 in tRNAs. This is Probable dual-specificity RNA methyltransferase RlmN from Clostridium botulinum (strain Alaska E43 / Type E3).